Here is a 293-residue protein sequence, read N- to C-terminus: NAD kinase (293 aa).

Asp73 (proton acceptor) is an active-site residue. NAD(+)-binding positions include 73 to 74, 147 to 148, His158, Arg175, Asp177, 188 to 193, and Gln248; these read DG, NE, and TAYSLS.

This sequence belongs to the NAD kinase family. A divalent metal cation is required as a cofactor.

The protein resides in the cytoplasm. The catalysed reaction is NAD(+) + ATP = ADP + NADP(+) + H(+). In terms of biological role, involved in the regulation of the intracellular balance of NAD and NADP, and is a key enzyme in the biosynthesis of NADP. Catalyzes specifically the phosphorylation on 2'-hydroxyl of the adenosine moiety of NAD to yield NADP. The chain is NAD kinase from Photobacterium profundum (strain SS9).